The following is a 243-amino-acid chain: 1-(5-phosphoribosyl)-5-[(5-phosphoribosylamino)methylideneamino] imidazole-4-carboxamide isomerase (243 aa).

Catalysis depends on Asp10, which acts as the Proton acceptor. Asp129 acts as the Proton donor in catalysis.

This sequence belongs to the HisA/HisF family.

The protein localises to the cytoplasm. The enzyme catalyses 1-(5-phospho-beta-D-ribosyl)-5-[(5-phospho-beta-D-ribosylamino)methylideneamino]imidazole-4-carboxamide = 5-[(5-phospho-1-deoxy-D-ribulos-1-ylimino)methylamino]-1-(5-phospho-beta-D-ribosyl)imidazole-4-carboxamide. It functions in the pathway amino-acid biosynthesis; L-histidine biosynthesis; L-histidine from 5-phospho-alpha-D-ribose 1-diphosphate: step 4/9. This is 1-(5-phosphoribosyl)-5-[(5-phosphoribosylamino)methylideneamino] imidazole-4-carboxamide isomerase from Nocardia farcinica (strain IFM 10152).